The sequence spans 177 residues: Protein TERMINAL FLOWER 1 (177 aa).

The protein belongs to the phosphatidylethanolamine-binding protein family. In terms of tissue distribution, expressed below the apical dome of inflorescence and coflorescence meristems, and in inflorescence stem.

The protein resides in the cytoplasm. In terms of biological role, controls inflorescence meristem identity and is required for maintenance of an indeterminate inflorescence. Prevents the expression of 'APETALA1' and 'LEAFY'. Also plays a role in the regulation of the time of flowering in the long-day flowering pathway. May form complexes with phosphorylated ligands by interfering with kinases and their effectors. In Arabidopsis thaliana (Mouse-ear cress), this protein is Protein TERMINAL FLOWER 1 (TFL1).